Here is a 523-residue protein sequence, read N- to C-terminus: 2-isopropylmalate synthase (523 aa).

Residues 5-267 (VIIFDTTLRD…ETGINAKEIH (263 aa)) form the Pyruvate carboxyltransferase domain. Asp14, His202, His204, and Asn238 together coordinate Mn(2+). The tract at residues 392-523 (ELQQLVVHSD…QQNKQEFGSV (132 aa)) is regulatory domain.

Belongs to the alpha-IPM synthase/homocitrate synthase family. LeuA type 1 subfamily. In terms of assembly, homodimer. Mn(2+) serves as cofactor.

It localises to the cytoplasm. The catalysed reaction is 3-methyl-2-oxobutanoate + acetyl-CoA + H2O = (2S)-2-isopropylmalate + CoA + H(+). It participates in amino-acid biosynthesis; L-leucine biosynthesis; L-leucine from 3-methyl-2-oxobutanoate: step 1/4. In terms of biological role, catalyzes the condensation of the acetyl group of acetyl-CoA with 3-methyl-2-oxobutanoate (2-ketoisovalerate) to form 3-carboxy-3-hydroxy-4-methylpentanoate (2-isopropylmalate). The polypeptide is 2-isopropylmalate synthase (Shewanella halifaxensis (strain HAW-EB4)).